Consider the following 761-residue polypeptide: MEEKYGGDARPGPGGGLGPVDVPSARLTRYILLLCLTKCLKAVGLFESYDLLKAVHIVQFIFILKLGTAFFMVLFQKPFSSGKPITKHQWIKIFKHAVAGCIISLLWFFGLTLCGPLRTLLLFEHSDIVVISLLSVLFTSSGGGPAKTRGAAFFIIAVICLLLFDNDDLMAKMAEHPEGHHDSALTHMLYTAIAFLGVADHKGGVLLLVLALCCKVGFHTASRKLSIDVGGAKRLQALSQLVSVFLLCPWVIVLSVTTESKVESWFSLIMPFTTVIFFVMILDFYMDSVCSVKMDVSKCARYGSFPIFISALLFGNFWTHPITDQLRAMNRAAHQESTEHVLSGGVVVSAVFFILSANILSSPSKRGQKGTLIGYSPEGTPLYHFMGDAFQHSSQSVPRFIKDSLKQVLEESDSRQIFYFLCLNLLFTFVELFYGVLTNSLGLISDGFHMLFDCSALVMGLFAALMSRWKATRIFSYGYGRIEILSGFINGLFLIVIAFFVFMESVARLIDPPELDTNMLTPVSVGGLIVNLIGICAFSHAHSHGHGASQGNCHSDHGHSHHAHGHGHDHGHSHGFTGGGMNANMRGVFLHVLADTLGSIGVIVSTVLIEQFGWFIADPLCSLFIAVLIFLSVIPLIKDACQVLLLRLPPDHEKELHIALEKIQKIEGLISYRDPHFWRHSASIVAGTIHIQVTSEVLEQRIVQQVTGILKDAGVNNLTIQVEKEAYFQHMSGLSTGFHDVLAMTKQMESLKYCKDGTYIM.

Methionine 1 bears the N-acetylmethionine mark. Over methionine 1 to arginine 29 the chain is Cytoplasmic. A helical membrane pass occupies residues tyrosine 30–phenylalanine 46. Residues glutamate 47–alanine 54 lie on the Lumenal side of the membrane. The helical transmembrane segment at valine 55–phenylalanine 75 threads the bilayer. Over glutamine 76–histidine 96 the chain is Cytoplasmic. A helical membrane pass occupies residues alanine 97–leucine 117. A topological domain (lumenal) is located at residue arginine 118. A helical transmembrane segment spans residues threonine 119 to threonine 139. At serine 140–glycine 150 the chain is on the cytoplasmic side. Residues alanine 151–alanine 171 form a helical membrane-spanning segment. At lysine 172–threonine 191 the chain is on the lumenal side. The chain crosses the membrane as a helical span at residues alanine 192 to leucine 212. The Cytoplasmic segment spans residues cysteine 213–glutamine 236. The helical transmembrane segment at alanine 237–threonine 257 threads the bilayer. Residues threonine 258 to serine 264 lie on the Lumenal side of the membrane. A helical transmembrane segment spans residues tryptophan 265–tyrosine 285. Residues methionine 286–arginine 301 lie on the Cytoplasmic side of the membrane. Residues tyrosine 302–isoleucine 322 traverse the membrane as a helical segment. The Lumenal segment spans residues threonine 323–histidine 340. A helical membrane pass occupies residues valine 341–serine 361. At serine 362 to glutamine 416 the chain is on the cytoplasmic side. Residues isoleucine 417–leucine 437 traverse the membrane as a helical segment. The segment at phenylalanine 418–leucine 636 is mediates homodimerization with SLC30A6. At threonine 438–aspartate 446 the chain is on the lumenal side. The chain crosses the membrane as a helical span at residues glycine 447 to serine 467. Zn(2+)-binding residues include histidine 449 and aspartate 453. Residues arginine 468 to arginine 481 lie on the Cytoplasmic side of the membrane. A helical membrane pass occupies residues isoleucine 482–phenylalanine 502. The Lumenal portion of the chain corresponds to methionine 503–asparagine 518. A helical membrane pass occupies residues methionine 519–serine 539. Positions histidine 540–histidine 574 are his-rich loop; required for zinc transport. At histidine 540–valine 588 the chain is on the cytoplasmic side. Residues serine 549 to phenylalanine 576 form a disordered region. A helical transmembrane segment spans residues phenylalanine 589–isoleucine 609. Residues histidine 591 and aspartate 595 each coordinate Zn(2+). The Lumenal portion of the chain corresponds to glutamate 610–glycine 613. The chain crosses the membrane as a helical span at residues tryptophan 614–isoleucine 634. At proline 635–methionine 761 the chain is on the cytoplasmic side.

It belongs to the cation diffusion facilitator (CDF) transporter (TC 2.A.4) family. SLC30A subfamily. In terms of assembly, heterodimer with SLC30A6/ZNT6; form a functional zinc ion transmembrane transporter. Could homodimerize through the formation of dityrosine bonds upon oxidative stress. As to expression, ubiquitously expressed.

Its subcellular location is the golgi apparatus. It is found in the golgi stack membrane. The protein localises to the cytoplasmic vesicle. It localises to the COPII-coated vesicle membrane. The protein resides in the secretory vesicle membrane. Its subcellular location is the trans-Golgi network membrane. It catalyses the reaction Zn(2+)(in) + 2 H(+)(out) = Zn(2+)(out) + 2 H(+)(in). Its function is as follows. Together with SLC30A6 forms a functional proton-coupled zinc ion antiporter mediating zinc entry into the lumen of organelles along the secretory pathway. By contributing to zinc ion homeostasis within the early secretory pathway, regulates the activation and folding of enzymes like alkaline phosphatases and enzymes involved in phosphatidylinositol glycan anchor biosynthesis. Through the transport of zinc into secretory granules of pancreatic beta-cells, plays an important role in the storage and secretion of insulin. The polypeptide is Proton-coupled zinc antiporter SLC30A5 (Mus musculus (Mouse)).